A 710-amino-acid polypeptide reads, in one-letter code: MDFGDEPEGSDSQRRRKRYHRHTPRQIQQLEAMFKECPHPDENQRAQLSRELGLEPRQIKFWFQNRRTQMKAQHERADNCFLRAENDKIRCENIAIREALKNVICPTCGGPPVGEDYFDEQKLRMENARLKEELDRVSNLTSKYLGRPFTQLPPATPPMTVSSLDLSVGGMGGPSLDLDLLSGGSSGIPFQLPAPVSDMERPMMAEMATRAMDELIRLAQAGDHIWSKSPGGGVSGGDARETLNVDTYDSIFSKPGGSYRAPSINVEGSRESGLVLMSAVALADVFMDTNKWMEFFPSIVSKAHTIDVLVNGMGGRSESLILMYEELHIMTPAVPTREVNFVRYCRQIEQGLWAIADVSVDLQRDAHFGAPPPRSRRLPSGCLIADMANGYSKVTWVEHMEVEEKSPINVLYRDLVLSGAAFGAHRWLAALQRACERYASLVALGVPHHIAGVTPEGKRSMMKLSQRMVNSFCSSLGASQMHQWTTLSGSNEVSVRVTMHRSTDPGQPNGVVLSAATSIWLPVPCDHVFAFVRDENTRSQWDVLSHGNQVQEVSRIPNGSNPGNCISLLRGLNASQNSMLILQESCTDASGSLVVYSPIDIPAANVVMSGEDPSSIPLLPSGFTILPDGRPGSAAGASTSSAGPLAAARGGGGGGAGGGSVVTVAFQILVSSLPSSKLNAESVATVNGLITTTVEQIKAALNCSAHGHHP.

A disordered region spans residues 1-23 (MDFGDEPEGSDSQRRRKRYHRHT). Over residues 14–23 (RRRKRYHRHT) the composition is skewed to basic residues. Residues 15–74 (RRKRYHRHTPRQIQQLEAMFKECPHPDENQRAQLSRELGLEPRQIKFWFQNRRTQMKAQH) constitute a DNA-binding region (homeobox). Residues 82–144 (LRAENDKIRC…DRVSNLTSKY (63 aa)) are a coiled coil. One can recognise an START domain in the interval 197–440 (SDMERPMMAE…LQRACERYAS (244 aa)). Residues 630-648 (RPGSAAGASTSSAGPLAAA) are compositionally biased toward low complexity. The segment at 630-650 (RPGSAAGASTSSAGPLAAARG) is disordered.

It belongs to the HD-ZIP homeobox family. Class IV subfamily.

It is found in the nucleus. Its function is as follows. Probable transcription factor. The polypeptide is Homeobox-leucine zipper protein ROC8 (ROC8) (Oryza sativa subsp. japonica (Rice)).